Here is a 210-residue protein sequence, read N- to C-terminus: Thymidylate kinase (210 aa).

Gly-10–Ser-17 lines the ATP pocket.

The protein belongs to the thymidylate kinase family.

The enzyme catalyses dTMP + ATP = dTDP + ADP. In terms of biological role, phosphorylation of dTMP to form dTDP in both de novo and salvage pathways of dTTP synthesis. The chain is Thymidylate kinase from Pseudomonas aeruginosa (strain UCBPP-PA14).